Reading from the N-terminus, the 158-residue chain is NADH-quinone oxidoreductase subunit B (158 aa).

Residues C37, C38, C102, and C132 each coordinate [4Fe-4S] cluster.

Belongs to the complex I 20 kDa subunit family. As to quaternary structure, NDH-1 is composed of 14 different subunits. Subunits NuoB, C, D, E, F, and G constitute the peripheral sector of the complex. The cofactor is [4Fe-4S] cluster.

Its subcellular location is the cell inner membrane. It catalyses the reaction a quinone + NADH + 5 H(+)(in) = a quinol + NAD(+) + 4 H(+)(out). NDH-1 shuttles electrons from NADH, via FMN and iron-sulfur (Fe-S) centers, to quinones in the respiratory chain. Couples the redox reaction to proton translocation (for every two electrons transferred, four hydrogen ions are translocated across the cytoplasmic membrane), and thus conserves the redox energy in a proton gradient. This chain is NADH-quinone oxidoreductase subunit B, found in Bordetella parapertussis (strain 12822 / ATCC BAA-587 / NCTC 13253).